The chain runs to 576 residues: FtsZ-localized protein C (576 aa).

Interacts with FtsZ filaments.

The protein resides in the cytoplasm. Its subcellular location is the cell inner membrane. Membrane anchor for FtsZ. Binds and recruits FtsZ polymers to membranes early in the cell cycle. May also improve the efficiency of cytokinesis through the regulation of cell wall hydrolysis. In Caulobacter vibrioides (strain NA1000 / CB15N) (Caulobacter crescentus), this protein is FtsZ-localized protein C.